Consider the following 52-residue polypeptide: Alpha-1-antiproteinase 3 (52 aa).

Residues 1-20 form a disordered region; the sequence is EDLQGDAVPEEXATKDDNEH.

This sequence belongs to the serpin family. Post-translationally, N-glycosylated; contains glycans with bi- and triantennary side chains. As to expression, plasma.

It localises to the secreted. This chain is Alpha-1-antiproteinase 3, found in Equus caballus (Horse).